The primary structure comprises 455 residues: Golgi pH regulator (455 aa).

Helical transmembrane passes span 5–25, 46–66, 79–99, 114–134, and 150–170; these read IDSS…WLFF, VTFA…LGVL, LCVI…YFIV, CLLW…FPIL, and VGVI…VNCP. N180 carries N-linked (GlcNAc...) asparagine glycosylation. Helical transmembrane passes span 288 to 308, 343 to 363, 378 to 398, and 425 to 445; these read FLGY…TINI, ISFI…LITL, VIVL…VLLI, and WFDV…YLAH.

It belongs to the Golgi pH regulator (TC 1.A.38) family. In terms of assembly, homotrimer. Interacts with RABL3; the interaction stabilizes GPR89.

The protein resides in the golgi apparatus membrane. It carries out the reaction iodide(out) = iodide(in). The enzyme catalyses chloride(in) = chloride(out). It catalyses the reaction bromide(in) = bromide(out). The catalysed reaction is fluoride(in) = fluoride(out). Voltage-gated channel that enables the transfer of monoatomic anions such as iodide, chloride, bromide and fluoride which may function in counter-ion conductance and participates in Golgi acidification. Plays a role in lymphocyte development, probably by acting as a RABL3 effector in hematopoietic cells. This chain is Golgi pH regulator, found in Mus musculus (Mouse).